Reading from the N-terminus, the 176-residue chain is 3-hydroxydecanoyl-[acyl-carrier-protein] dehydratase (176 aa).

The active site involves H75.

Belongs to the thioester dehydratase family. FabA subfamily. Homodimer.

Its subcellular location is the cytoplasm. The enzyme catalyses a (3R)-hydroxyacyl-[ACP] = a (2E)-enoyl-[ACP] + H2O. The catalysed reaction is (3R)-hydroxydecanoyl-[ACP] = (2E)-decenoyl-[ACP] + H2O. It catalyses the reaction (2E)-decenoyl-[ACP] = (3Z)-decenoyl-[ACP]. The protein operates within lipid metabolism; fatty acid biosynthesis. Its function is as follows. Necessary for the introduction of cis unsaturation into fatty acids. Catalyzes the dehydration of (3R)-3-hydroxydecanoyl-ACP to E-(2)-decenoyl-ACP and then its isomerization to Z-(3)-decenoyl-ACP. Can catalyze the dehydratase reaction for beta-hydroxyacyl-ACPs with saturated chain lengths up to 16:0, being most active on intermediate chain length. The polypeptide is 3-hydroxydecanoyl-[acyl-carrier-protein] dehydratase (Haemophilus ducreyi (strain 35000HP / ATCC 700724)).